Consider the following 165-residue polypeptide: Cyanate hydratase (165 aa).

Active-site residues include Arg-106, Glu-109, and Ser-132.

This sequence belongs to the cyanase family.

The enzyme catalyses cyanate + hydrogencarbonate + 3 H(+) = NH4(+) + 2 CO2. Its function is as follows. Catalyzes the reaction of cyanate with bicarbonate to produce ammonia and carbon dioxide. This chain is Cyanate hydratase, found in Laccaria bicolor (strain S238N-H82 / ATCC MYA-4686) (Bicoloured deceiver).